The following is a 405-amino-acid chain: L-rhamnonate dehydratase (405 aa).

2 residues coordinate substrate: H33 and R59. Residues D226, E252, and E280 each contribute to the Mg(2+) site. Catalysis depends on H329, which acts as the Proton acceptor. E349 serves as a coordination point for substrate.

It belongs to the mandelate racemase/muconate lactonizing enzyme family. RhamD subfamily. Homooctamer; tetramer of dimers. Mg(2+) serves as cofactor.

The catalysed reaction is L-rhamnonate = 2-dehydro-3-deoxy-L-rhamnonate + H2O. Catalyzes the dehydration of L-rhamnonate to 2-keto-3-deoxy-L-rhamnonate (KDR). This chain is L-rhamnonate dehydratase, found in Salmonella typhi.